The following is a 94-amino-acid chain: Conotoxin Cal22a (94 aa).

Positions 1-24 (MMSTKGITLFLCLLLLALATSVNG) are cleaved as a signal peptide. The propeptide occupies 25-44 (GQGTRRSRMTRALHGGRPSA).

In terms of processing, contains 4 disulfide bonds. As to expression, expressed by the venom duct.

The protein localises to the secreted. Probable neurotoxin with unknown target. Possibly targets ion channels. This is Conotoxin Cal22a from Californiconus californicus (California cone).